The sequence spans 611 residues: Probable potassium transport system protein Kup 1 (611 aa).

A run of 12 helical transmembrane segments spans residues 6 to 26, 44 to 64, 90 to 110, 129 to 149, 158 to 178, 193 to 213, 237 to 257, 280 to 300, 328 to 348, 354 to 374, 385 to 405, and 410 to 430; these read LMVG…LYTM, MLSL…VAVV, LGVI…GAIT, ISPY…ALQA, LFGP…LFGI, GLSY…AVFL, WYGL…AVVV, LVAL…SGAF, IYIG…TLGF, LAAA…ILMF, LAAS…FVSA, and VLEG…LMMT.

This sequence belongs to the HAK/KUP transporter (TC 2.A.72) family.

It localises to the cell inner membrane. The enzyme catalyses K(+)(in) + H(+)(in) = K(+)(out) + H(+)(out). Its function is as follows. Transport of potassium into the cell. Likely operates as a K(+):H(+) symporter. This chain is Probable potassium transport system protein Kup 1, found in Bradyrhizobium sp. (strain BTAi1 / ATCC BAA-1182).